The sequence spans 551 residues: Scaffold protein OPG125 (551 aa).

It belongs to the orthopoxvirus protein OPG125 family. As to quaternary structure, homotrimer. Self-assembles to form a layer. Interacts with OPG158 (via N-terminus); this interaction is necessary for OPG125 association with membranes.

Its subcellular location is the membrane. In terms of biological role, scaffold protein which forms a transitory spherical honeycomb lattice providing curvature and rigidity to the convex membrane of crescent and immature virions (IV). This association occurs concomitantly with viral membrane formation. Targeted by the drug rifampicin, which prevents the formation of this lattice, and hence virus morphogenesis. In the presence of rifampicin, irregularly shaped membranes that lack the honeycomb layer accumulate around areas of electron-dense viroplasm. This layer is lost from virions during maturation from IV to mature virion (MV), through the proteolysis of OPG158 N-terminus. The chain is Scaffold protein OPG125 (OPG125) from Vaccinia virus (strain Ankara) (VACV).